A 377-amino-acid polypeptide reads, in one-letter code: MPLIDLPGFAGDLLADFERRNTLRVDTPVIQPAEPFLDMAGEDLRRRIFMTESETGESLCLRPEFTIPVCLRHIETATGTPQRYAYLGEVFRQRRDGSSEFYQAGIEDLGDPDTAAADARVVGDALFVLSNRLPGERLKVTLGDQSVFEAVIAACGLPGGWQKRLIHAFGDQKQLDRLLAELADPKSPGVFGHDVERVAALGMLDDEERLVAHIGETMEATGYSTNASRSPRDIARRLKEKVELAATRLDKEALAVMRAFLALDLPLADAPAALHSFAGKARLRIDDALELFDARVAALALAGADPGPMRYRAAFGRPLDYYTGLVFEIHVEGTPAVLAGGGRFDRLLTLLGAREHIPAVGFSLWLDRIEQAAGREK.

This sequence belongs to the class-II aminoacyl-tRNA synthetase family. HisZ subfamily. Heteromultimer composed of HisG and HisZ subunits.

It is found in the cytoplasm. It functions in the pathway amino-acid biosynthesis; L-histidine biosynthesis; L-histidine from 5-phospho-alpha-D-ribose 1-diphosphate: step 1/9. Required for the first step of histidine biosynthesis. May allow the feedback regulation of ATP phosphoribosyltransferase activity by histidine. This chain is ATP phosphoribosyltransferase regulatory subunit, found in Sinorhizobium medicae (strain WSM419) (Ensifer medicae).